A 193-amino-acid chain; its full sequence is Pilin-like protein PilA2 (193 aa).

A propeptide spans 1 to 4 (MRKG) (leader sequence). N-methylleucine is present on Leu5. A helical transmembrane segment spans residues 5 to 25 (LTLVEVLVTLVIMGIAFAALL).

Its subcellular location is the cell inner membrane. The protein resides in the cell outer membrane. It is found in the periplasm. Functionally, plays an essential role in natural DNA transformation but is not required for pilus biogenesis. This Thermus thermophilus (strain ATCC BAA-163 / DSM 7039 / HB27) protein is Pilin-like protein PilA2 (pilA2).